The sequence spans 225 residues: UPF0758 protein Sden_0326 (225 aa).

One can recognise an MPN domain in the interval 102–224 (ILTNPDLTRD…IVSFAERGWL (123 aa)). Zn(2+) contacts are provided by His173, His175, and Asp186. Positions 173-186 (HNHPSGIAEPSQAD) match the JAMM motif motif.

It belongs to the UPF0758 family.

The polypeptide is UPF0758 protein Sden_0326 (Shewanella denitrificans (strain OS217 / ATCC BAA-1090 / DSM 15013)).